The sequence spans 492 residues: Solute carrier family 2, facilitated glucose transporter member 1 (492 aa).

Met-1 is subject to N-acetylmethionine. Residues 1-11 (MDPSSKKVTGR) lie on the Cytoplasmic side of the membrane. A helical membrane pass occupies residues 12–33 (LMLAVGGAVLGSLQFGYNTGVI). The Extracellular segment spans residues 34–66 (NAPQKVIEEFYNQTWNHRYGEPIPSTTLTTLWS). Residue Asn-45 is glycosylated (N-linked (GlcNAc...) asparagine). Residues 67-87 (LSVAIFSVGGMIGSFSVGLFV) traverse the membrane as a helical segment. At 88-90 (NRF) the chain is on the cytoplasmic side. A helical transmembrane segment spans residues 91-112 (GRRNSMLMMNLLAFVAAVLMGF). The Extracellular segment spans residues 113–120 (SKLGKSFE). A helical transmembrane segment spans residues 121–144 (MLILGRFIIGVYCGLTTGFVPMYV). At 145-155 (GEVSPTALRGA) the chain is on the cytoplasmic side. The helical transmembrane segment at 156 to 176 (LGTLHQLGIVVGILIAQVFGL) threads the bilayer. Gln-161 serves as a coordination point for D-glucose. Topologically, residues 177–185 (DSIMGNADL) are extracellular. The chain crosses the membrane as a helical span at residues 186–206 (WPLLLSVIFIPALLQCILLPF). Residues 207-271 (CPESPRFLLI…LFRSPAYRQP (65 aa)) lie on the Cytoplasmic side of the membrane. Residue Ser-226 is modified to Phosphoserine. A helical membrane pass occupies residues 272-293 (ILIAVVLQLSQQLSGINAVFYY). Residues 282-283 (QQ) and Asn-288 each bind D-glucose. Topologically, residues 294 to 306 (STSIFEKAGVQQP) are extracellular. The chain crosses the membrane as a helical span at residues 307-328 (VYATIGSGIVNTAFTVVSLFVV). Position 317 (Asn-317) interacts with D-glucose. At 329–334 (ERAGRR) the chain is on the cytoplasmic side. A helical membrane pass occupies residues 335–355 (TLHLIGLAGMAGCAVLMTIAL). At 356 to 365 (ALLERLPWMS) the chain is on the extracellular side. The helical transmembrane segment at 366 to 388 (YLSIVAIFGFVAFFEVGPGPIPW) threads the bilayer. 2 residues coordinate D-glucose: Glu-380 and Trp-388. Residues 389 to 401 (FIVAELFSQGPRP) lie on the Cytoplasmic side of the membrane. A helical membrane pass occupies residues 402 to 422 (AAIAVAGFSNWTSNFIVGMCF). The Extracellular segment spans residues 423–429 (QYVEQLC). The helical transmembrane segment at 430-450 (GPYVFIIFTVLLVLFFIFTYF) threads the bilayer. Residues 451–492 (KVPETKGRTFDEIASGFRQGGASQSDKTPEELFHPLGADSQV) are Cytoplasmic-facing. Residue Ser-465 is modified to Phosphoserine. A disordered region spans residues 468–492 (RQGGASQSDKTPEELFHPLGADSQV). Thr-478 carries the post-translational modification Phosphothreonine. The residue at position 490 (Ser-490) is a Phosphoserine.

Belongs to the major facilitator superfamily. Sugar transporter (TC 2.A.1.1) family. Glucose transporter subfamily. In terms of assembly, found in a complex with ADD2, DMTN and SLC2A1. Interacts (via C-terminus cytoplasmic region) with DMTN isoform 2. Interacts with SNX27; the interaction is required when endocytosed to prevent degradation in lysosomes and promote recycling to the plasma membrane. Interacts with GIPC (via PDZ domain). Interacts with STOM. Interacts with SGTA (via Gln-rich region). Interacts with isoform 1 of BSG. Interacts with SMIM43; the interaction may promote SLC2A1-mediated glucose transport to meet the energy needs of mesendoderm differentiation. Post-translationally, phosphorylation at Ser-226 by PKC promotes glucose uptake by increasing cell membrane localization. Retina (at protein level).

Its subcellular location is the cell membrane. The protein resides in the photoreceptor inner segment. It catalyses the reaction D-glucose(out) = D-glucose(in). Its activity is regulated as follows. The uptake of glucose is inhibited by cytochalasin B. Glucose uptake is increased in response to phorbol ester 12-O-tetradecanoylphorbol-13-acetate (TPA) treatment: TPA-induced glucose uptake requires phosphorylation at Ser-226. Functionally, facilitative glucose transporter, which is responsible for constitutive or basal glucose uptake. Has a very broad substrate specificity; can transport a wide range of aldoses including both pentoses and hexoses. Most important energy carrier of the brain: present at the blood-brain barrier and assures the energy-independent, facilitative transport of glucose into the brain. In association with BSG and NXNL1, promotes retinal cone survival by increasing glucose uptake into photoreceptors. Required for mesendoderm differentiation. The chain is Solute carrier family 2, facilitated glucose transporter member 1 from Mus musculus (Mouse).